The sequence spans 213 residues: Dimethylamine corrinoid protein 3 (213 aa).

Positions M1–L91 constitute a B12-binding N-terminal domain. A B12-binding domain is found at G92–L213. Methylcob(III)alamin is bound at residue H104.

This sequence belongs to the methylamine corrinoid protein family.

It participates in one-carbon metabolism; methanogenesis from dimethylamine. Its function is as follows. Acts as a methyl group carrier between MtbB and MtbA. The polypeptide is Dimethylamine corrinoid protein 3 (mtbC3) (Methanosarcina acetivorans (strain ATCC 35395 / DSM 2834 / JCM 12185 / C2A)).